Here is a 351-residue protein sequence, read N- to C-terminus: Nicotinate-nucleotide--dimethylbenzimidazole phosphoribosyltransferase (351 aa).

Glu317 functions as the Proton acceptor in the catalytic mechanism.

It belongs to the CobT family.

The enzyme catalyses 5,6-dimethylbenzimidazole + nicotinate beta-D-ribonucleotide = alpha-ribazole 5'-phosphate + nicotinate + H(+). It participates in nucleoside biosynthesis; alpha-ribazole biosynthesis; alpha-ribazole from 5,6-dimethylbenzimidazole: step 1/2. In terms of biological role, catalyzes the synthesis of alpha-ribazole-5'-phosphate from nicotinate mononucleotide (NAMN) and 5,6-dimethylbenzimidazole (DMB). The chain is Nicotinate-nucleotide--dimethylbenzimidazole phosphoribosyltransferase from Pseudomonas aeruginosa (strain LESB58).